We begin with the raw amino-acid sequence, 225 residues long: LexA repressor (225 aa).

Residues 26 to 46 (YEEMKDSLNLKSKSGIHRLIS) constitute a DNA-binding region (H-T-H motif). Residues S146 and K184 each act as for autocatalytic cleavage activity in the active site.

It belongs to the peptidase S24 family. As to quaternary structure, homodimer.

The catalysed reaction is Hydrolysis of Ala-|-Gly bond in repressor LexA.. Its function is as follows. Represses a number of genes involved in the response to DNA damage (SOS response), including recA and lexA. In the presence of single-stranded DNA, RecA interacts with LexA causing an autocatalytic cleavage which disrupts the DNA-binding part of LexA, leading to derepression of the SOS regulon and eventually DNA repair. The sequence is that of LexA repressor from Pelagibacter ubique (strain HTCC1062).